Consider the following 413-residue polypeptide: MKERIILAYSGGLDTSVAIGWIAEATGAEVVAVAVDVGQGGESLETIRQRALDCGAVEAYVADARDEFAEQYCMPTLKANALYMDAYPLVSAISRPVISRHLVAAARQFGASTVAHGCTGKGNDQVRFEVSIQTLGPDLKCIAPVRDLALTREKAIEYAERNDLPIVTTKKNPFSIDQNVWGRAVETGFLEDIWNGPTKDVYDYTDDPAFPPAPDVVTIAFERGVPTALDGRALSPLEIIEELNRRAGAQGVGRIDIVEDRLVGIKSREIYEAPGAMALIAAHRELENVTLEREQARFKKHVDQRWTELVYDGQWYSPLKRNLDTFIDATQEHVNGEIRLELHGGRATVQGRRSETGLYDFNLATYDEGDSFDQSSARGFIDIFGLSAKTASEREQRLRGSADLQDVARLSND.

8 to 16 (AYSGGLDTS) is an ATP binding site. Tyr87 is an L-citrulline binding site. An ATP-binding site is contributed by Gly117. The L-aspartate site is built by Thr119, Asn123, and Asp124. An L-citrulline-binding site is contributed by Asn123. L-citrulline contacts are provided by Arg127, Ser175, Glu259, and Tyr271.

This sequence belongs to the argininosuccinate synthase family. Type 1 subfamily. Homotetramer.

Its subcellular location is the cytoplasm. The catalysed reaction is L-citrulline + L-aspartate + ATP = 2-(N(omega)-L-arginino)succinate + AMP + diphosphate + H(+). It participates in amino-acid biosynthesis; L-arginine biosynthesis; L-arginine from L-ornithine and carbamoyl phosphate: step 2/3. The polypeptide is Argininosuccinate synthase (Micrococcus luteus (strain ATCC 4698 / DSM 20030 / JCM 1464 / CCM 169 / CCUG 5858 / IAM 1056 / NBRC 3333 / NCIMB 9278 / NCTC 2665 / VKM Ac-2230) (Micrococcus lysodeikticus)).